The primary structure comprises 200 residues: 3-isopropylmalate dehydratase small subunit 2 (200 aa).

This sequence belongs to the LeuD family. LeuD type 1 subfamily. In terms of assembly, heterodimer of LeuC and LeuD.

The enzyme catalyses (2R,3S)-3-isopropylmalate = (2S)-2-isopropylmalate. Its pathway is amino-acid biosynthesis; L-leucine biosynthesis; L-leucine from 3-methyl-2-oxobutanoate: step 2/4. Its function is as follows. Catalyzes the isomerization between 2-isopropylmalate and 3-isopropylmalate, via the formation of 2-isopropylmaleate. This chain is 3-isopropylmalate dehydratase small subunit 2, found in Mannheimia succiniciproducens (strain KCTC 0769BP / MBEL55E).